Reading from the N-terminus, the 159-residue chain is ATP synthase subunit b (159 aa).

Residues 2-22 traverse the membrane as a helical segment; the sequence is NISIPQIIAAILNFIILLLIV.

This sequence belongs to the ATPase B chain family. F-type ATPases have 2 components, F(1) - the catalytic core - and F(0) - the membrane proton channel. F(1) has five subunits: alpha(3), beta(3), gamma(1), delta(1), epsilon(1). F(0) has three main subunits: a(1), b(2) and c(10-14). The alpha and beta chains form an alternating ring which encloses part of the gamma chain. F(1) is attached to F(0) by a central stalk formed by the gamma and epsilon chains, while a peripheral stalk is formed by the delta and b chains.

The protein resides in the cell membrane. In terms of biological role, f(1)F(0) ATP synthase produces ATP from ADP in the presence of a proton or sodium gradient. F-type ATPases consist of two structural domains, F(1) containing the extramembraneous catalytic core and F(0) containing the membrane proton channel, linked together by a central stalk and a peripheral stalk. During catalysis, ATP synthesis in the catalytic domain of F(1) is coupled via a rotary mechanism of the central stalk subunits to proton translocation. Its function is as follows. Component of the F(0) channel, it forms part of the peripheral stalk, linking F(1) to F(0). The chain is ATP synthase subunit b from Clostridium botulinum (strain ATCC 19397 / Type A).